A 606-amino-acid chain; its full sequence is Radial spoke head protein 3 homolog (606 aa).

The segment at 1–103 (MARSEARRQA…NSPEAPPLDG (103 aa)) is disordered. The segment covering 15 to 46 (PRAVPEERALRERRQPRPRREPLESGAGDHRR) has biased composition (basic and acidic residues). Position 331 is a phosphothreonine; by MAPK1 (T331). Positions 393–429 (AYEELRNIELAEVQRLEEQERRHREEKERRKQQQWQV) form a coiled coil. A disordered region spans residues 520–606 (EGRHASVRPE…KSSKREELSQ (87 aa)). The span at 547–556 (SQDQGASQAQ) shows a compositional bias: polar residues. The stretch at 572–604 (ARYAERVSSQERRLAEENDELTEMRKSSKREEL) forms a coiled coil. Basic and acidic residues predominate over residues 573–606 (RYAERVSSQERRLAEENDELTEMRKSSKREELSQ).

This sequence belongs to the flagellar radial spoke RSP3 family. In terms of assembly, component of the axonemal radial spoke 1 (RS1) and 2 (RS2) complexes, at least composed of spoke head proteins RSPH1, RSPH3, RSPH9 and the cilia-specific component RSPH4A or sperm-specific component RSPH6A, spoke stalk proteins RSPH14, DNAJB13, DYDC1, ROPN1L and NME5, and the RS1 complex-specific anchor protein IQUB. Interacts with IQUB. Interacts with phosphorylated MAPK1. Interacts with MEK1. Interacts with PKA regulatory subunits PRKAR1A and PRKAR1B. Interacts with RSPH1. Interacts with RSPH4A. Interacts with RSPH6A. Interacts with RSPH9. Interacts with LRRC23.

The protein localises to the cytoplasm. The protein resides in the cytoskeleton. Its subcellular location is the cilium axoneme. It localises to the flagellum axoneme. In terms of biological role, functions as part of axonemal radial spoke complexes that play an important part in the motility of sperm and cilia. Functions as a protein kinase A-anchoring protein that scaffolds the cAMP-dependent protein kinase holoenzyme. May serve as a point of convergence for MAPK and PKA signaling in cilia. This Bos taurus (Bovine) protein is Radial spoke head protein 3 homolog (RSPH3).